Here is a 2359-residue protein sequence, read N- to C-terminus: Pre-mRNA-processing-splicing factor 8B (2359 aa).

The disordered stretch occupies residues 1 to 50 (MWNIDGTSLAPPGTDGSRMQTPSHPADHPSYTAPSNRNTPTVPTPEDAEA). The segment covering 32–41 (TAPSNRNTPT) has biased composition (polar residues). One can recognise an MPN domain in the interval 2129–2260 (TYIMPKNILK…LTSYKLTQAG (132 aa)).

The protein resides in the nucleus. Its function is as follows. Functions as a scaffold that mediates the ordered assembly of spliceosomal proteins and snRNAs. Required for the assembly of the U4/U6-U5 tri-snRNP complex. The polypeptide is Pre-mRNA-processing-splicing factor 8B (Arabidopsis thaliana (Mouse-ear cress)).